A 552-amino-acid chain; its full sequence is Glutamine--tRNA ligase (552 aa).

The short motif at 34–44 (PEPNGYLHIGH) is the 'HIGH' region element. Residues 35-37 (EPN) and 41-47 (HIGHAKS) contribute to the ATP site. L-glutamine-binding residues include D67 and Y212. ATP is bound by residues T231, 261-262 (RL), and 269-271 (MSK). A 'KMSKS' region motif is present at residues 268-272 (IMSKR).

The protein belongs to the class-I aminoacyl-tRNA synthetase family. Monomer.

The protein resides in the cytoplasm. The catalysed reaction is tRNA(Gln) + L-glutamine + ATP = L-glutaminyl-tRNA(Gln) + AMP + diphosphate. The protein is Glutamine--tRNA ligase of Aliivibrio salmonicida (strain LFI1238) (Vibrio salmonicida (strain LFI1238)).